The chain runs to 353 residues: Zinc transporter 5 (353 aa).

A signal peptide spans methionine 1–alanine 27. Topologically, residues alanine 28 to lysine 48 are extracellular. A helical transmembrane segment spans residues valine 49–glycine 69. Residues glycine 70–lysine 86 are Cytoplasmic-facing. The helical transmembrane segment at alanine 87 to glutamate 107 threads the bilayer. At alanine 108–arginine 121 the chain is on the extracellular side. A helical transmembrane segment spans residues phenylalanine 122–valine 142. Residues alanine 143–arginine 198 are Cytoplasmic-facing. The helical transmembrane segment at valine 199 to leucine 219 threads the bilayer. Residues glycine 220 to proline 230 lie on the Extracellular side of the membrane. Residues leucine 231 to valine 251 traverse the membrane as a helical segment. The Cytoplasmic portion of the chain corresponds to glutamine 252–valine 260. The chain crosses the membrane as a helical span at residues valine 261–isoleucine 281. At serine 282–alanine 292 the chain is on the extracellular side. The helical transmembrane segment at leucine 293–valine 313 threads the bilayer. At aspartate 314–glutamine 332 the chain is on the cytoplasmic side. The chain crosses the membrane as a helical span at residues leucine 333–alanine 353.

This sequence belongs to the ZIP transporter (TC 2.A.5) family.

It is found in the cell membrane. In terms of biological role, zinc transporter that mediates zinc uptake from the rhizosphere and may be responsible for the translocation of zinc within the plant. The protein is Zinc transporter 5 (ZIP5) of Oryza sativa subsp. japonica (Rice).